A 240-amino-acid polypeptide reads, in one-letter code: Adenosylcobinamide-GDP ribazoletransferase (240 aa).

5 consecutive transmembrane segments (helical) span residues 31–51 (LLYY…ASHL), 62–81 (ALLL…DGLA), 109–129 (IAVV…WVLV), 133–153 (IGAQ…GLFL), and 179–199 (VLLV…LLAL).

Belongs to the CobS family. Requires Mg(2+) as cofactor.

It is found in the cell inner membrane. It catalyses the reaction alpha-ribazole + adenosylcob(III)inamide-GDP = adenosylcob(III)alamin + GMP + H(+). It carries out the reaction alpha-ribazole 5'-phosphate + adenosylcob(III)inamide-GDP = adenosylcob(III)alamin 5'-phosphate + GMP + H(+). It participates in cofactor biosynthesis; adenosylcobalamin biosynthesis; adenosylcobalamin from cob(II)yrinate a,c-diamide: step 7/7. Its function is as follows. Joins adenosylcobinamide-GDP and alpha-ribazole to generate adenosylcobalamin (Ado-cobalamin). Also synthesizes adenosylcobalamin 5'-phosphate from adenosylcobinamide-GDP and alpha-ribazole 5'-phosphate. This chain is Adenosylcobinamide-GDP ribazoletransferase, found in Pseudomonas putida (strain ATCC 700007 / DSM 6899 / JCM 31910 / BCRC 17059 / LMG 24140 / F1).